The chain runs to 143 residues: MAEEAPAPVVAPVEAPTPILGEPMDLMTALQLVMKKSSAHDGLVKGLREAAKSIEKHAAQLCVLAEDCDQPDYVKLVKALCAEHNVHLVTVPSAKTLGEWAGLCKIDTEGKARKVVGCSCIVVKDYGEESEGLNIVQQYVKSQ.

It belongs to the eukaryotic ribosomal protein eS12 family.

This chain is Small ribosomal subunit protein eS12 (RPS12), found in Hordeum vulgare (Barley).